The primary structure comprises 77 residues: Acyl carrier protein (77 aa).

Positions 1 to 76 constitute a Carrier domain; that stretch reads MADFEKVKSI…DVTKFIDNLK (76 aa). An O-(pantetheine 4'-phosphoryl)serine modification is found at serine 36.

Belongs to the acyl carrier protein (ACP) family. 4'-phosphopantetheine is transferred from CoA to a specific serine of apo-ACP by AcpS. This modification is essential for activity because fatty acids are bound in thioester linkage to the sulfhydryl of the prosthetic group.

The protein resides in the cytoplasm. The protein operates within lipid metabolism; fatty acid biosynthesis. In terms of biological role, carrier of the growing fatty acid chain in fatty acid biosynthesis. The protein is Acyl carrier protein of Leptospira borgpetersenii serovar Hardjo-bovis (strain JB197).